The following is a 128-amino-acid chain: Large ribosomal subunit protein bL12 (128 aa).

Belongs to the bacterial ribosomal protein bL12 family. Homodimer. Part of the ribosomal stalk of the 50S ribosomal subunit. Forms a multimeric L10(L12)X complex, where L10 forms an elongated spine to which 2 to 4 L12 dimers bind in a sequential fashion. Binds GTP-bound translation factors.

Its function is as follows. Forms part of the ribosomal stalk which helps the ribosome interact with GTP-bound translation factors. Is thus essential for accurate translation. The chain is Large ribosomal subunit protein bL12 from Synechococcus sp. (strain CC9311).